Here is a 98-residue protein sequence, read N- to C-terminus: Large ribosomal subunit protein eL14 (98 aa).

This sequence belongs to the eukaryotic ribosomal protein eL14 family.

The protein is Large ribosomal subunit protein eL14 of Hyperthermus butylicus (strain DSM 5456 / JCM 9403 / PLM1-5).